Consider the following 1064-residue polypeptide: Importin-13 homolog A (1064 aa).

Positions 40 to 109 (ALPQIQQWLI…LDNLLLFLKT (70 aa)) constitute an Importin N-terminal domain. Disordered stretches follow at residues 695–722 (TTQQENNNNNNNNNNNNNNNNNNNNNNN) and 839–860 (NNKKNNKKINNNIDIDNDNENN). Residues 700–722 (NNNNNNNNNNNNNNNNNNNNNNN) show a composition bias toward low complexity.

It belongs to the importin beta family. Forms a complex with an importin alpha subunit.

The protein resides in the cytoplasm. It is found in the nucleus envelope. In terms of biological role, required for nuclear protein import and mediates docking of import substrate to distinct nucleoporins. This chain is Importin-13 homolog A (ipo13A), found in Dictyostelium discoideum (Social amoeba).